The chain runs to 427 residues: Membrane-bound hydrogenase subunit alpha (427 aa).

Cys-68, Cys-71, Cys-374, and Cys-377 together coordinate Ni(2+).

This sequence belongs to the complex I 49 kDa subunit family. In terms of assembly, the membrane-bound hydrogenase complex is composed of MbhK and MbhL, and may also contain MbhJ. The cofactor is Ni(2+).

The protein localises to the cell membrane. The catalysed reaction is H2 + 2 oxidized [2Fe-2S]-[ferredoxin] = 2 reduced [2Fe-2S]-[ferredoxin] + 2 H(+). Inhibited by 0.1 mM Cu(2+). Alpha subunit of a hydrogen-evolving hydrogenase that utilizes protons both as a substrate for hydrogen production and proton translocation. Acts by coupling the redox reaction via ferredoxin and iron-sulfur (Fe-S) clusters to proton translocation across the membrane thereby conserving the redox energy in a proton gradient. This is Membrane-bound hydrogenase subunit alpha from Pyrococcus furiosus (strain ATCC 43587 / DSM 3638 / JCM 8422 / Vc1).